The primary structure comprises 323 residues: Pseudouridylate synthase TRUB2, mitochondrial (323 aa).

Asp98 functions as the Nucleophile in the catalytic mechanism. The tract at residues 302-323 (SGHQQQLPSAGQPWASRVQAPL) is disordered.

Belongs to the pseudouridine synthase TruB family. Forms a regulatory protein-RNA complex, consisting of RCC1L, NGRN, RPUSD3, RPUSD4, TRUB2, FASTKD2 and 16S mt-rRNA.

The protein resides in the mitochondrion matrix. It carries out the reaction a uridine in mRNA = a pseudouridine in mRNA. The catalysed reaction is uridine(55) in tRNA = pseudouridine(55) in tRNA. In terms of biological role, minor enzyme contributing to the isomerization of uridine to pseudouridine (pseudouridylation) of specific mitochondrial mRNAs (mt-mRNAs) such as COXI and COXIII mt-mRNAs. As a component of a functional protein-RNA module, consisting of RCC1L, NGRN, RPUSD3, RPUSD4, TRUB2, FASTKD2 and 16S mitochondrial ribosomal RNA (16S mt-rRNA), controls 16S mt-rRNA abundance and is required for intra-mitochondrial translation. Also catalyzes pseudouridylation of some tRNAs, including synthesis of pseudouridine(55) from uracil-55, in the psi GC loop of a subset of tRNAs. This chain is Pseudouridylate synthase TRUB2, mitochondrial, found in Rattus norvegicus (Rat).